Here is a 212-residue protein sequence, read N- to C-terminus: Thymidylate kinase (212 aa).

Residue 13–20 participates in ATP binding; that stretch reads GLEGAGKS.

It belongs to the thymidylate kinase family.

It carries out the reaction dTMP + ATP = dTDP + ADP. Functionally, phosphorylation of dTMP to form dTDP in both de novo and salvage pathways of dTTP synthesis. In Legionella pneumophila (strain Corby), this protein is Thymidylate kinase.